Reading from the N-terminus, the 347-residue chain is NADH-quinone oxidoreductase subunit H (347 aa).

8 consecutive transmembrane segments (helical) span residues 13 to 33, 82 to 102, 115 to 135, 161 to 181, 198 to 218, 248 to 268, 283 to 303, and 321 to 341; these read LLIL…VAYI, GVFL…WAVI, VGIL…IMGG, IGFV…SDIV, FLDW…ISAL, FLLF…LATI, FTWV…FFGI, and LGWK…AAFL.

Belongs to the complex I subunit 1 family. NDH-1 is composed of 14 different subunits. Subunits NuoA, H, J, K, L, M, N constitute the membrane sector of the complex.

Its subcellular location is the cell inner membrane. It carries out the reaction a quinone + NADH + 5 H(+)(in) = a quinol + NAD(+) + 4 H(+)(out). In terms of biological role, NDH-1 shuttles electrons from NADH, via FMN and iron-sulfur (Fe-S) centers, to quinones in the respiratory chain. The immediate electron acceptor for the enzyme in this species is believed to be ubiquinone. Couples the redox reaction to proton translocation (for every two electrons transferred, four hydrogen ions are translocated across the cytoplasmic membrane), and thus conserves the redox energy in a proton gradient. This subunit may bind ubiquinone. The polypeptide is NADH-quinone oxidoreductase subunit H (Mesorhizobium japonicum (strain LMG 29417 / CECT 9101 / MAFF 303099) (Mesorhizobium loti (strain MAFF 303099))).